The primary structure comprises 37 residues: Large ribosomal subunit protein bL36 (37 aa).

It belongs to the bacterial ribosomal protein bL36 family.

The polypeptide is Large ribosomal subunit protein bL36 (Trichodesmium erythraeum (strain IMS101)).